The chain runs to 191 residues: Fe/S biogenesis protein NfuA (191 aa).

Residues cysteine 149 and cysteine 152 each contribute to the [4Fe-4S] cluster site.

The protein belongs to the NfuA family. In terms of assembly, homodimer. [4Fe-4S] cluster is required as a cofactor.

Functionally, involved in iron-sulfur cluster biogenesis. Binds a 4Fe-4S cluster, can transfer this cluster to apoproteins, and thereby intervenes in the maturation of Fe/S proteins. Could also act as a scaffold/chaperone for damaged Fe/S proteins. This chain is Fe/S biogenesis protein NfuA, found in Pectobacterium atrosepticum (strain SCRI 1043 / ATCC BAA-672) (Erwinia carotovora subsp. atroseptica).